A 465-amino-acid chain; its full sequence is MSFLVAIVGRANVGKSTLFNVLTNSRDALVFDFEGVTRDRQYGQAKYDDLGYLVVDTGGISDQDAGFDEFMAKQSQMAIDEANLVFFVVDGRSGLTSGDEYVANLLRQKDKRVVVVVNKVDGVEEESAMAEFYELGFDKVFAVSAAHRRNTQKLLDKFLKKPLNEFYRDYTQTQEHKEQQRHGIHFSLIGRPNVGKSTLTNRMLGEDRVVVFDMPGTTIDSVSIPFERHGHKYTIVDTAGVRRRGKVKQTLEKFSVIKTLQAIQDSNVVVAVVDAREGISDQDLSLIHFAIKNGRALVLAINKWDGMTEEDRNLVKQDLKRKLFFLEDYVDVHFISALHGTNVGHVFESIDTAYACANKKITTADATRLMQLAVEAHSPPMVGKFRIKLKYAHVGGHNPPVIVIHGNQVNRLPNSYKRYLENFFREALDFRGTPIVFEFKQSENPFADRKNKRIKDEGSKSKKTK.

2 consecutive EngA-type G domains span residues 3–166 (FLVA…LNEF) and 184–358 (IHFS…ACAN). GTP-binding positions include 9–16 (GRANVGKS), 56–60 (DTGGI), 118–121 (NKVD), 190–197 (GRPNVGKS), 237–241 (DTAGV), and 302–305 (NKWD). Residues 359 to 443 (KKITTADATR…PIVFEFKQSE (85 aa)) form the KH-like domain.

This sequence belongs to the TRAFAC class TrmE-Era-EngA-EngB-Septin-like GTPase superfamily. EngA (Der) GTPase family. In terms of assembly, associates with the 50S ribosomal subunit.

Functionally, GTPase that plays an essential role in the late steps of ribosome biogenesis. This chain is GTPase Der, found in Francisella philomiragia subsp. philomiragia (strain ATCC 25017 / CCUG 19701 / FSC 153 / O#319-036).